Here is a 182-residue protein sequence, read N- to C-terminus: Ribosome-recycling factor (182 aa).

The tract at residues 136–156 (VKKQEKDGDFSEDQSRDEQDS) is disordered.

Belongs to the RRF family.

The protein localises to the cytoplasm. Responsible for the release of ribosomes from messenger RNA at the termination of protein biosynthesis. May increase the efficiency of translation by recycling ribosomes from one round of translation to another. This Synechococcus sp. (strain CC9902) protein is Ribosome-recycling factor.